Here is a 1257-residue protein sequence, read N- to C-terminus: Period circadian protein homolog 2 (1257 aa).

The interval 1–59 (MNGYVDFSPSPTSPTQEPGEPQPTQAVLQEDVDMSSGSSGNENCSTGRDSQGSDCDDSG) is disordered. Residues 8–25 (SPSPTSPTQEPGEPQPTQ) are compositionally biased toward low complexity. Over residues 35–53 (SSGSSGNENCSTGRDSQGS) the composition is skewed to polar residues. A Nuclear export signal 1 motif is present at residues 109–118 (LIRTLRELKV). A PAS 1 domain is found at 179–246 (ITSEYIVKNS…FHSYTTPYKL (68 aa)). Positions 306–310 (LCCLL) match the LXXLL motif. A PAS 2 domain is found at 319 to 385 (YEAPRIPPEK…MLAIHKKILQ (67 aa)). The PAC domain maps to 393 to 436 (YSPIRFRTRNGEYITLDTSWSSFINPWSRKISFIIGRHKVRVGP). A Nuclear export signal 2 motif is present at residues 460-469 (LTEQIHRLLM). The segment at 471-567 (PVPHSGSSGY…RDSSGASLPK (97 aa)) is disordered. The important for protein stability stretch occupies residues 478–482 (SGYGS). Composition is skewed to polar residues over residues 493 to 504 (MSQTSSSDSNGQ) and 518 to 528 (SGKSQSKSHFS). Residues 510–709 (RRSGIFKTSG…DAAGGLSQEK (200 aa)) are CSNK1E binding domain. Ser525, Ser528, Ser531, Ser538, and Ser544 each carry phosphoserine. Residues 541-555 (EMQSSPPAQVRSVTT) show a composition bias toward polar residues. Residue Thr554 is modified to Phosphothreonine. Phosphoserine is present on residues Ser659, Ser693, Ser697, Ser706, Ser758, and Ser763. Disordered stretches follow at residues 678 to 706 (DKKP…GGLS) and 757 to 833 (RSRA…CPSA). The Nuclear localization signal signature appears at 778–794 (KKTGKNRKLKSKRVKTR). The segment covering 779–792 (KTGKNRKLKSKRVK) has biased composition (basic residues). Positions 821–832 (SPSDTSQSSCPS) are enriched in low complexity. A Phosphothreonine modification is found at Thr858. The segment at 882 to 1067 (EFAVQPLPFA…DLCSATGSAL (186 aa)) is interaction with PPARG. Phosphoserine is present on Ser939. Residue Thr964 is modified to Phosphothreonine. The residue at position 971 (Ser971) is a Phosphoserine. The short motif at 983-990 (LQLNLLQL) is the Nuclear export signal 3 element. A disordered region spans residues 993-1044 (APESSTGAAGTLGTTGTAASGLDCTSGASRDRQPKAPPTCSEPSDTQNSDAI). The span at 996–1014 (SSTGAAGTLGTTGTAASGL) shows a compositional bias: low complexity. The segment covering 1033-1044 (SEPSDTQNSDAI) has biased composition (polar residues). Positions 1051 to 1055 (LNLLL) match the LXXLL motif. Residues 1070–1089 (SGASATSDSLGSSSLGCDTS) are compositionally biased toward low complexity. The interval 1070–1108 (SGASATSDSLGSSSLGCDTSRSGAGSSDTSHTSKYFGSI) is disordered. The segment covering 1090–1108 (RSGAGSSDTSHTSKYFGSI) has biased composition (polar residues). Ser1126 is modified (phosphoserine). Residues 1157–1257 (SRDLQAVLKE…LANPRKEAQT (101 aa)) are CRY binding domain. The segment at 1226-1257 (EEDSPSLGLCDTSEAKEEESGQLANPRKEAQT) is disordered.

In terms of assembly, homodimer. Component of the circadian core oscillator, which includes the CRY proteins, CLOCK or NPAS2, BMAL1 or BMAL2, CSNK1D and/or CSNK1E, TIMELESS, and the PER proteins. Interacts with CLOCK-BMAL1 (off DNA). Interacts directly with PER1 and PER3, and through a C-terminal domain, with CRY1 and CRY2. Interacts (via PAS 2 domain) with TIMELESS. Interacts with NFIL3. Different large complexes have been identified with different repressive functions. The core of PER complexes is composed of at least PER1, PER2, PER3, CRY1, CRY2, CSNK1D and/or CSNK1E. The large PER complex involved in the repression of transcriptional termination is composed of at least PER2, CDK9, DDX5, DHX9, NCBP1 and POLR2A (active). The large PER complex involved in the histone deacetylation is composed of at least HDAC1, PER2, SFPQ and SIN3A. The large PER complex involved in the histone methylation is composed of at least PER2, CBX3, TRIM28, SUV39H1 and/or SUV39H2; CBX3 mediates the formation of the complex. Interacts with SETX; the interaction inhibits termination of circadian target genes. Interacts with the nuclear receptors HNF4A, NR1D1, NR4A2, RORA, PPARA, PPARG and THRA; the interaction with at least PPARG is ligand dependent. Interacts with PML. Interacts (phosphorylated) with BTRC and FBXW11; the interactions trigger proteasomal degradation. Interacts with NONO and SFPQ. Interacts with CAVIN3. Interacts with MAGEL2. Interacts with MAP1LC3B. Interacts with HNF4A. Post-translationally, acetylated. Deacetylated by SIRT1, resulting in decreased protein stability. Deacetylated by SIRT6, preventing its degradation by the proteasome, resulting in increased protein stability. Phosphorylated by CSNK1E and CSNK1D. Phosphorylation results in PER2 protein degradation. May be dephosphorylated by PP1. In terms of processing, ubiquitinated, leading to its proteasomal degradation. Ubiquitination may be inhibited by CRY1. Expressed in all tissues examined including eye, brain, heart, lung, spleen, liver, pancreas and kidney. In the CNS, highly expressed in the SCN, internal granular layer of granular cells of the olfactory bulb, tuberculum olfactorium, piriform cortex, gyrus dentatus of the hippocampus, cerebellum, pars tuberalis/median eminence, and pituitary, and moderately in the tenia tecta, caudate putamen, accumbens nucleus, superior and inferior colliculus and pineal gland.

Its subcellular location is the nucleus. The protein resides in the cytoplasm. It is found in the perinuclear region. Its function is as follows. Transcriptional repressor which forms a core component of the circadian clock. The circadian clock, an internal time-keeping system, regulates various physiological processes through the generation of approximately 24 hour circadian rhythms in gene expression, which are translated into rhythms in metabolism and behavior. It is derived from the Latin roots 'circa' (about) and 'diem' (day) and acts as an important regulator of a wide array of physiological functions including metabolism, sleep, body temperature, blood pressure, endocrine, immune, cardiovascular, and renal function. Consists of two major components: the central clock, residing in the suprachiasmatic nucleus (SCN) of the brain, and the peripheral clocks that are present in nearly every tissue and organ system. Both the central and peripheral clocks can be reset by environmental cues, also known as Zeitgebers (German for 'timegivers'). The predominant Zeitgeber for the central clock is light, which is sensed by retina and signals directly to the SCN. The central clock entrains the peripheral clocks through neuronal and hormonal signals, body temperature and feeding-related cues, aligning all clocks with the external light/dark cycle. Circadian rhythms allow an organism to achieve temporal homeostasis with its environment at the molecular level by regulating gene expression to create a peak of protein expression once every 24 hours to control when a particular physiological process is most active with respect to the solar day. Transcription and translation of core clock components (CLOCK, NPAS2, BMAL1, BMAL2, PER1, PER2, PER3, CRY1 and CRY2) plays a critical role in rhythm generation, whereas delays imposed by post-translational modifications (PTMs) are important for determining the period (tau) of the rhythms (tau refers to the period of a rhythm and is the length, in time, of one complete cycle). A diurnal rhythm is synchronized with the day/night cycle, while the ultradian and infradian rhythms have a period shorter and longer than 24 hours, respectively. Disruptions in the circadian rhythms contribute to the pathology of cardiovascular diseases, cancer, metabolic syndrome and aging. A transcription/translation feedback loop (TTFL) forms the core of the molecular circadian clock mechanism. Transcription factors, CLOCK or NPAS2 and BMAL1 or BMAL2, form the positive limb of the feedback loop, act in the form of a heterodimer and activate the transcription of core clock genes and clock-controlled genes (involved in key metabolic processes), harboring E-box elements (5'-CACGTG-3') within their promoters. The core clock genes: PER1/2/3 and CRY1/2 which are transcriptional repressors form the negative limb of the feedback loop and interact with the CLOCK|NPAS2-BMAL1|BMAL2 heterodimer inhibiting its activity and thereby negatively regulating their own expression. This heterodimer also activates nuclear receptors NR1D1/2 and RORA/B/G, which form a second feedback loop and which activate and repress BMAL1 transcription, respectively. PER1 and PER2 proteins transport CRY1 and CRY2 into the nucleus with appropriate circadian timing, but also contribute directly to repression of clock-controlled target genes through interaction with several classes of RNA-binding proteins, helicases and others transcriptional repressors. PER appears to regulate circadian control of transcription by at least three different modes. First, interacts directly with the CLOCK-BMAL1 at the tail end of the nascent transcript peak to recruit complexes containing the SIN3-HDAC that remodel chromatin to repress transcription. Second, brings H3K9 methyltransferases such as SUV39H1 and SUV39H2 to the E-box elements of the circadian target genes, like PER2 itself or PER1. The recruitment of each repressive modifier to the DNA seems to be very precisely temporally orchestrated by the large PER complex, the deacetylases acting before than the methyltransferases. Additionally, large PER complexes are also recruited to the target genes 3' termination site through interactions with RNA-binding proteins and helicases that may play a role in transcription termination to regulate transcription independently of CLOCK-BMAL1 interactions. Recruitment of large PER complexes to the elongating polymerase at PER and CRY termination sites inhibited SETX action, impeding RNA polymerase II release and thereby repressing transcriptional reinitiation. May propagate clock information to metabolic pathways via the interaction with nuclear receptors. Coactivator of PPARA and corepressor of NR1D1, binds rhythmically at the promoter of nuclear receptors target genes like BMAL1 or G6PC1. Directly and specifically represses PPARG proadipogenic activity by blocking PPARG recruitment to target promoters and thereby transcriptional activation. Required for fatty acid and lipid metabolism, is involved as well in the regulation of circulating insulin levels. Plays an important role in the maintenance of cardiovascular functions through the regulation of NO and vasodilatatory prostaglandins production in aortas. Controls circadian glutamate uptake in synaptic vesicles through the regulation of VGLUT1 expression. May also be involved in the regulation of inflammatory processes. Represses the CLOCK-BMAL1 induced transcription of BHLHE40/DEC1 and ATF4. Negatively regulates the formation of the TIMELESS-CRY1 complex by competing with TIMELESS for binding to CRY1. The chain is Period circadian protein homolog 2 from Rattus norvegicus (Rat).